A 253-amino-acid polypeptide reads, in one-letter code: 3-deoxy-manno-octulosonate cytidylyltransferase (253 aa).

The protein belongs to the KdsB family.

It is found in the cytoplasm. The catalysed reaction is 3-deoxy-alpha-D-manno-oct-2-ulosonate + CTP = CMP-3-deoxy-beta-D-manno-octulosonate + diphosphate. Its pathway is nucleotide-sugar biosynthesis; CMP-3-deoxy-D-manno-octulosonate biosynthesis; CMP-3-deoxy-D-manno-octulosonate from 3-deoxy-D-manno-octulosonate and CTP: step 1/1. It functions in the pathway bacterial outer membrane biogenesis; lipopolysaccharide biosynthesis. Activates KDO (a required 8-carbon sugar) for incorporation into bacterial lipopolysaccharide in Gram-negative bacteria. In Acinetobacter baumannii (strain SDF), this protein is 3-deoxy-manno-octulosonate cytidylyltransferase.